The chain runs to 858 residues: Leucine--tRNA ligase (858 aa).

The 'HIGH' region signature appears at 42 to 52 (PYPSGNLHMGH). The segment covering 584-594 (NPNRSDSSRYI) has biased composition (polar residues). The segment at 584–611 (NPNRSDSSRYIPSNLVDPNDPKDPETGE) is disordered. Residues 619–623 (TMSKS) carry the 'KMSKS' region motif. Lys622 is an ATP binding site.

This sequence belongs to the class-I aminoacyl-tRNA synthetase family.

It localises to the cytoplasm. It catalyses the reaction tRNA(Leu) + L-leucine + ATP = L-leucyl-tRNA(Leu) + AMP + diphosphate. The polypeptide is Leucine--tRNA ligase (Cyanothece sp. (strain PCC 7425 / ATCC 29141)).